The sequence spans 114 residues: MRFFNNKHRAKGLKAEEEACGFLKTLGFEMVERNFFSQFGEIDIIALKKGVLHFIEVKSGENFDPIYAITPSKLKKMIKTIRCYFSQKDPNSDFCIDALIVKNGKFELLENITF.

Belongs to the UPF0102 family.

This chain is UPF0102 protein HPG27_782, found in Helicobacter pylori (strain G27).